A 67-amino-acid chain; its full sequence is Large ribosomal subunit protein bL35 (67 aa).

Belongs to the bacterial ribosomal protein bL35 family.

The polypeptide is Large ribosomal subunit protein bL35 (Sinorhizobium fredii (strain NBRC 101917 / NGR234)).